The sequence spans 82 residues: Small ribosomal subunit protein bS16 (82 aa).

Belongs to the bacterial ribosomal protein bS16 family.

The sequence is that of Small ribosomal subunit protein bS16 from Haemophilus ducreyi (strain 35000HP / ATCC 700724).